The chain runs to 361 residues: DNA-(apurinic or apyrimidinic site) endonuclease (361 aa).

The interval 1–90 (MTSRTKKLKM…TNKTTASVSI (90 aa)) is disordered. Acidic residues predominate over residues 25–39 (TSEEEKEEVEEEEEE). The Nuclear localization signal signature appears at 41 to 44 (KKRK). Residues 43 to 64 (RKLVKKTPAKKAPAKKAAAKKK) are compositionally biased toward basic residues. A compositionally biased stretch (acidic residues) spans 68–80 (EDEDEEEKEEEEE). Glu-139 contributes to the Mg(2+) binding site. Tyr-211 is a catalytic residue. Mg(2+)-binding residues include Asp-252, Asn-254, and Asp-350. The active-site Proton donor/acceptor is Asp-252.

This sequence belongs to the DNA repair enzymes AP/ExoA family. It depends on Mg(2+) as a cofactor. Mn(2+) serves as cofactor.

The protein resides in the nucleus. The sequence is that of DNA-(apurinic or apyrimidinic site) endonuclease (apeA) from Dictyostelium discoideum (Social amoeba).